The sequence spans 1879 residues: Protein TIC 214 (1879 aa).

6 helical membrane-spanning segments follow: residues 18-38 (IINS…FSIG), 67-87 (FITG…HLAL), 90-110 (PHTI…WNNH), 127-147 (LSIQ…HFIL), 175-195 (VGWL…LVWI), and 218-238 (IFSI…PSPI). Residues 243–291 (LKETEERGESEEERDVEKTSETKGTKQEQEGSTEEDPSPSLFSEEKEDP) form a disordered region. A compositionally biased stretch (basic and acidic residues) spans 257–271 (DVEKTSETKGTKQEQ).

It belongs to the TIC214 family. As to quaternary structure, part of the Tic complex.

The protein resides in the plastid. Its subcellular location is the chloroplast inner membrane. Involved in protein precursor import into chloroplasts. May be part of an intermediate translocation complex acting as a protein-conducting channel at the inner envelope. This chain is Protein TIC 214, found in Morus indica (Mulberry).